The primary structure comprises 426 residues: Protein FAM124B (426 aa).

This sequence belongs to the FAM124 family.

Its subcellular location is the nucleus. The polypeptide is Protein FAM124B (fam124b) (Xenopus tropicalis (Western clawed frog)).